Here is a 1453-residue protein sequence, read N- to C-terminus: ABC transporter G family member 34 (1453 aa).

Residues 1–24 (MLGRDEDLVRTMSGRGSLGSTSHR) form a disordered region. One can recognise an ABC transporter 1 domain in the interval 173-446 (LGLFHLLPSK…FEYMGFKCPE (274 aa)). Residue 206–213 (GPPSSGKT) participates in ATP binding. The region spanning 524-737 (DLFKACFDRE…GQTALVINEF (214 aa)) is the ABC transmembrane type-2 1 domain. A run of 6 helical transmembrane segments spans residues 542-562 (FVYV…MTVY), 582-602 (LFFS…FTVM), 621-641 (FALP…VIWI), 661-681 (LLAY…LGAL), 687-707 (IANS…GFII), and 773-793 (FWIC…CYII). The ABC transporter 2 domain maps to 852-1105 (LAFNNVNYYV…LVEYFEAIEG (254 aa)). 897–904 (GVSGAGKT) provides a ligand contact to ATP. The region spanning 1177–1391 (TQTKACFWKM…TLYGIITSQV (215 aa)) is the ABC transmembrane type-2 2 domain. 7 helical membrane passes run 1196–1216 (YNAI…LLFW), 1230–1250 (NFFG…AATV), 1289–1309 (IQTG…WTVV), 1311–1331 (FFWF…YGMM), 1341–1361 (IAGI…GFLI), 1366–1386 (IPIW…LYGI), and 1422–1442 (FLPV…FAFA).

This sequence belongs to the ABC transporter superfamily. ABCG family. PDR (TC 3.A.1.205) subfamily. Expressed in roots at low levels.

It is found in the membrane. Functionally, may be a general defense protein. In Arabidopsis thaliana (Mouse-ear cress), this protein is ABC transporter G family member 34 (ABCG34).